The sequence spans 173 residues: Protein FAM180A (173 aa).

The first 17 residues, 1–17 (MSWKALTILLVFSSTQA), serve as a signal peptide directing secretion.

It belongs to the FAM180 family.

It localises to the secreted. The sequence is that of Protein FAM180A (Fam180a) from Mus musculus (Mouse).